The sequence spans 290 residues: S-methyl-5'-thioadenosine phosphorylase 2 (290 aa).

Residues S14, 57–58 (RH), and 90–91 (SA) contribute to the phosphate site. M185 is a binding site for substrate. S186 is a phosphate binding site. Substrate is bound at residue 209-211 (DYD).

This sequence belongs to the PNP/MTAP phosphorylase family. MTAP subfamily. Homotrimer.

The protein localises to the cytoplasm. Its subcellular location is the nucleus. It carries out the reaction S-methyl-5'-thioadenosine + phosphate = 5-(methylsulfanyl)-alpha-D-ribose 1-phosphate + adenine. The protein operates within amino-acid biosynthesis; L-methionine biosynthesis via salvage pathway; S-methyl-5-thio-alpha-D-ribose 1-phosphate from S-methyl-5'-thioadenosine (phosphorylase route): step 1/1. Catalyzes the reversible phosphorylation of S-methyl-5'-thioadenosine (MTA) to adenine and 5-methylthioribose-1-phosphate. Involved in the breakdown of MTA, a major by-product of polyamine biosynthesis. Responsible for the first step in the methionine salvage pathway after MTA has been generated from S-adenosylmethionine. Has broad substrate specificity with 6-aminopurine nucleosides as preferred substrates. The protein is S-methyl-5'-thioadenosine phosphorylase 2 of Puccinia graminis f. sp. tritici (strain CRL 75-36-700-3 / race SCCL) (Black stem rust fungus).